A 345-amino-acid polypeptide reads, in one-letter code: Dihydroorotase (345 aa).

Zn(2+) is bound by residues His-13 and His-15. Residues 15–17 (HFR) and Asn-41 each bind substrate. Zn(2+)-binding residues include Lys-98, His-135, and His-173. Position 98 is an N6-carboxylysine (Lys-98). His-135 is a substrate binding site. Leu-218 provides a ligand contact to substrate. Position 246 (Asp-246) interacts with Zn(2+). Residue Asp-246 is part of the active site. Positions 250 and 262 each coordinate substrate.

It belongs to the metallo-dependent hydrolases superfamily. DHOase family. Class II DHOase subfamily. As to quaternary structure, homodimer. Requires Zn(2+) as cofactor.

It carries out the reaction (S)-dihydroorotate + H2O = N-carbamoyl-L-aspartate + H(+). The protein operates within pyrimidine metabolism; UMP biosynthesis via de novo pathway; (S)-dihydroorotate from bicarbonate: step 3/3. In terms of biological role, catalyzes the reversible cyclization of carbamoyl aspartate to dihydroorotate. The polypeptide is Dihydroorotase (Shewanella frigidimarina (strain NCIMB 400)).